Here is a 66-residue protein sequence, read N- to C-terminus: Large ribosomal subunit protein bL35 (66 aa).

Composition is skewed to basic residues over residues 1 to 16 (MPKM…RVKR) and 38 to 49 (TKQKRQLRKARL). Positions 1–49 (MPKMKTHRGAAKRVKRTASGQLKRSRAFTSHLFANKSTKQKRQLRKARL) are disordered.

The protein belongs to the bacterial ribosomal protein bL35 family.

This is Large ribosomal subunit protein bL35 from Staphylococcus aureus (strain MSSA476).